The following is a 330-amino-acid chain: 4-hydroxythreonine-4-phosphate dehydrogenase (330 aa).

Substrate contacts are provided by H134 and T135. A divalent metal cation-binding residues include H163, H208, and H263. Residues K271, N280, and R289 each contribute to the substrate site.

This sequence belongs to the PdxA family. As to quaternary structure, homodimer. Zn(2+) is required as a cofactor. The cofactor is Mg(2+). It depends on Co(2+) as a cofactor.

The protein resides in the cytoplasm. It catalyses the reaction 4-(phosphooxy)-L-threonine + NAD(+) = 3-amino-2-oxopropyl phosphate + CO2 + NADH. The protein operates within cofactor biosynthesis; pyridoxine 5'-phosphate biosynthesis; pyridoxine 5'-phosphate from D-erythrose 4-phosphate: step 4/5. Its function is as follows. Catalyzes the NAD(P)-dependent oxidation of 4-(phosphooxy)-L-threonine (HTP) into 2-amino-3-oxo-4-(phosphooxy)butyric acid which spontaneously decarboxylates to form 3-amino-2-oxopropyl phosphate (AHAP). This Methylococcus capsulatus (strain ATCC 33009 / NCIMB 11132 / Bath) protein is 4-hydroxythreonine-4-phosphate dehydrogenase.